A 455-amino-acid polypeptide reads, in one-letter code: Putative PTS system EIIBC component YbbF (455 aa).

Positions 8–90 constitute a PTS EIIB type-1 domain; that stretch reads HHLAQKILEL…SKLVSAEEGA (83 aa). C30 serves as the catalytic Phosphocysteine intermediate; for EIIB activity. The PTS EIIC type-1 domain maps to 116–455; that stretch reads RKIASIFIPL…YKDEMASQFD (340 aa). Helical transmembrane passes span 118–138, 154–174, 181–201, 210–230, 250–270, 281–301, 325–345, 355–375, 399–419, and 423–443; these read IASI…ITGI, IAII…ILVG, FGGT…PEIA, LLPG…IAYT, VSLL…GGFI, ILDI…LPLV, LLPI…AVFV, AIAG…IFGV, YFQV…FLVL, and IILY…LTYA.

It is found in the cell membrane. Its function is as follows. The phosphoenolpyruvate-dependent sugar phosphotransferase system (sugar PTS), a major carbohydrate active -transport system, catalyzes the phosphorylation of incoming sugar substrates concomitantly with their translocation across the cell membrane. This is Putative PTS system EIIBC component YbbF (ybbF) from Bacillus subtilis (strain 168).